A 214-amino-acid polypeptide reads, in one-letter code: Ion-translocating oxidoreductase complex subunit G (214 aa).

Residues 13 to 33 form a helical membrane-spanning segment; sequence ALLLGLFALVGVGLVALVQQF. The residue at position 180 (threonine 180) is an FMN phosphoryl threonine.

This sequence belongs to the RnfG family. In terms of assembly, the complex is composed of six subunits: RnfA, RnfB, RnfC, RnfD, RnfE and RnfG. The cofactor is FMN.

Its subcellular location is the cell inner membrane. Part of a membrane-bound complex that couples electron transfer with translocation of ions across the membrane. The chain is Ion-translocating oxidoreductase complex subunit G from Pseudomonas aeruginosa (strain UCBPP-PA14).